Reading from the N-terminus, the 333-residue chain is T-cell surface glycoprotein CD1b1 (333 aa).

The N-terminal stretch at 1 to 17 (MLLVALALLAFLFPAGD) is a signal peptide. Residues 18–302 (TQNALQWPTS…LYWGHSISIG (285 aa)) lie on the Extracellular side of the membrane. Residues N38, N75, and N146 are each glycosylated (N-linked (GlcNAc...) asparagine). 3 disulfides stabilise this stretch: C120/C184, C149/C163, and C224/C279. The 99-residue stretch at 197 to 295 (PDIQKQVKPD…LEGQDIILYW (99 aa)) folds into the Ig-like domain. Residues 303-323 (WIILAVLVPCLIVLVLFVLWF) traverse the membrane as a helical segment. At 324–333 (YRRWSYEDIL) the chain is on the cytoplasmic side. An Internalization signal motif is present at residues 329–332 (YEDI).

Heterodimer with B2M (beta-2-microglobulin). Interacts with saposin C.

Its subcellular location is the cell membrane. The protein resides in the endosome membrane. The protein localises to the lysosome membrane. In terms of biological role, antigen-presenting protein that binds self and non-self lipid and glycolipid antigens and presents them to T-cell receptors on natural killer T-cells. The polypeptide is T-cell surface glycoprotein CD1b1 (CD1B1) (Cavia porcellus (Guinea pig)).